We begin with the raw amino-acid sequence, 209 residues long: Pyrrolidone-carboxylate peptidase (209 aa).

Residues glutamate 79, cysteine 142, and histidine 164 contribute to the active site.

This sequence belongs to the peptidase C15 family. In terms of assembly, homotetramer.

Its subcellular location is the cytoplasm. The enzyme catalyses Release of an N-terminal pyroglutamyl group from a polypeptide, the second amino acid generally not being Pro.. In terms of biological role, removes 5-oxoproline from various penultimate amino acid residues except L-proline. The chain is Pyrrolidone-carboxylate peptidase from Saccharolobus islandicus (strain Y.N.15.51 / Yellowstone #2) (Sulfolobus islandicus).